The sequence spans 700 residues: Serine/threonine-protein kinase WNK1 (700 aa).

The 258-residue stretch at 24-281 folds into the Protein kinase domain; that stretch reads GRYNEVLGKG…ARELLDDPFL (258 aa). Residues 104–107 and Lys154 each bind ATP; that span reads TELF. The Proton acceptor role is filled by Asp171. A compositionally biased stretch (low complexity) spans 314–339; that stretch reads NYPSNSSSLNRQYSNGNYPSNSSSLN. Disordered regions lie at residues 314-345, 551-575, and 647-666; these read NYPSNSSSLNRQYSNGNYPSNSSSLNRQYSNG, ESRELSSIDSGHNHSEEEEEEEVLY, and ESGEEVEISPKDGFLGSVSG. The span at 551–565 shows a compositional bias: basic and acidic residues; that stretch reads ESRELSSIDSGHNHS. The span at 566–575 shows a compositional bias: acidic residues; that stretch reads EEEEEEEVLY.

It belongs to the protein kinase superfamily. Ser/Thr protein kinase family. WNK subfamily. Post-translationally, autophosphorylated.

The catalysed reaction is L-seryl-[protein] + ATP = O-phospho-L-seryl-[protein] + ADP + H(+). It carries out the reaction L-threonyl-[protein] + ATP = O-phospho-L-threonyl-[protein] + ADP + H(+). Functionally, regulates flowering time by modulating the photoperiod pathway. Phosphorylates APRR3. The sequence is that of Serine/threonine-protein kinase WNK1 (WNK1) from Arabidopsis thaliana (Mouse-ear cress).